A 362-amino-acid polypeptide reads, in one-letter code: Cobalt-precorrin-5B C(1)-methyltransferase (362 aa).

Belongs to the CbiD family.

It catalyses the reaction Co-precorrin-5B + S-adenosyl-L-methionine = Co-precorrin-6A + S-adenosyl-L-homocysteine. It functions in the pathway cofactor biosynthesis; adenosylcobalamin biosynthesis; cob(II)yrinate a,c-diamide from sirohydrochlorin (anaerobic route): step 6/10. Its function is as follows. Catalyzes the methylation of C-1 in cobalt-precorrin-5B to form cobalt-precorrin-6A. This chain is Cobalt-precorrin-5B C(1)-methyltransferase, found in Burkholderia vietnamiensis (strain G4 / LMG 22486) (Burkholderia cepacia (strain R1808)).